The following is a 414-amino-acid chain: Gamma-glutamyl phosphate reductase (414 aa).

Belongs to the gamma-glutamyl phosphate reductase family.

It localises to the cytoplasm. It catalyses the reaction L-glutamate 5-semialdehyde + phosphate + NADP(+) = L-glutamyl 5-phosphate + NADPH + H(+). Its pathway is amino-acid biosynthesis; L-proline biosynthesis; L-glutamate 5-semialdehyde from L-glutamate: step 2/2. In terms of biological role, catalyzes the NADPH-dependent reduction of L-glutamate 5-phosphate into L-glutamate 5-semialdehyde and phosphate. The product spontaneously undergoes cyclization to form 1-pyrroline-5-carboxylate. This is Gamma-glutamyl phosphate reductase from Bacillus anthracis (strain A0248).